We begin with the raw amino-acid sequence, 667 residues long: Endogenous retrovirus group K member 5 Gag polyprotein (667 aa).

Gly-2 carries N-myristoyl glycine lipidation. Residues 166-188 are disordered; the sequence is KGPELVGPSESKPRGPSPLPAGQ. CCHC-type zinc fingers lie at residues 543-560 and 580-597; these read KKCY…SCPV and GLCP…QCHS. The segment at 598–667 is disordered; that stretch reads KFDKDGQPLS…CPAPQQAAPQ (70 aa). A compositionally biased stretch (polar residues) spans 648–667; that stretch reads GVSQLQQSNSCPAPQQAAPQ.

It belongs to the beta type-B retroviral Gag protein family. HERV class-II K(HML-2) gag subfamily. In terms of processing, myristoylation is essential for retroviral assembly. Alteration of the glycine residue leads to a block in the budding of particles and an accumulation of Gag inside the cell. Post-translationally, specific enzymatic cleavages may yield mature proteins.

It localises to the cell membrane. The products of the Gag polyproteins of infectious retroviruses perform highly complex orchestrated tasks during the assembly, budding, maturation, and infection stages of the viral replication cycle. During viral assembly, the proteins form membrane associations and self-associations that ultimately result in budding of an immature virion from the infected cell. Gag precursors also function during viral assembly to selectively bind and package two plus strands of genomic RNA. Endogenous Gag proteins may have kept, lost or modified their original function during evolution. The polypeptide is Endogenous retrovirus group K member 5 Gag polyprotein (ERVK-5) (Homo sapiens (Human)).